A 278-amino-acid polypeptide reads, in one-letter code: Cysteine-rich repeat secretory protein 18 (278 aa).

An N-terminal signal peptide occupies residues 1 to 32 (MYSSSSVSKRFVLVPIVVVVTTQLLLVRNVSS). Gnk2-homologous domains lie at 39–147 (YLHH…SLDT) and 160–267 (PSAK…LYPF).

It belongs to the cysteine-rich repeat secretory protein family.

It is found in the secreted. This chain is Cysteine-rich repeat secretory protein 18 (CRRSP18), found in Arabidopsis thaliana (Mouse-ear cress).